The sequence spans 180 residues: tRNA (cytidine(56)-2'-O)-methyltransferase (180 aa).

S-adenosyl-L-methionine-binding positions include leucine 83, 115–119, and 133–140; these read GAEKV and VGNQPHSE.

The protein belongs to the aTrm56 family. Homodimer.

Its subcellular location is the cytoplasm. The catalysed reaction is cytidine(56) in tRNA + S-adenosyl-L-methionine = 2'-O-methylcytidine(56) in tRNA + S-adenosyl-L-homocysteine + H(+). Specifically catalyzes the AdoMet-dependent 2'-O-ribose methylation of cytidine at position 56 in tRNAs. The chain is tRNA (cytidine(56)-2'-O)-methyltransferase from Methanococcus aeolicus (strain ATCC BAA-1280 / DSM 17508 / OCM 812 / Nankai-3).